A 348-amino-acid chain; its full sequence is D-alanine--D-alanine ligase (348 aa).

Residues 132–334 (KRILEVAGVP…YSDIIKELVV (203 aa)) enclose the ATP-grasp domain. An ATP-binding site is contributed by 162–217 (LEKLTFPVFVKPANMGSSVGISKAENESELRSAIDLALKYDSRILIEQGVVAREIE). Mg(2+) is bound by residues aspartate 288, glutamate 301, and asparagine 303.

This sequence belongs to the D-alanine--D-alanine ligase family. Mg(2+) is required as a cofactor. It depends on Mn(2+) as a cofactor.

Its subcellular location is the cytoplasm. It catalyses the reaction 2 D-alanine + ATP = D-alanyl-D-alanine + ADP + phosphate + H(+). It functions in the pathway cell wall biogenesis; peptidoglycan biosynthesis. Cell wall formation. The chain is D-alanine--D-alanine ligase from Streptococcus thermophilus (strain CNRZ 1066).